Here is a 149-residue protein sequence, read N- to C-terminus: UPF0178 protein Psyc_0274 (149 aa).

The protein belongs to the UPF0178 family.

The protein is UPF0178 protein Psyc_0274 of Psychrobacter arcticus (strain DSM 17307 / VKM B-2377 / 273-4).